The primary structure comprises 225 residues: PKHD-type hydroxylase YbiX (225 aa).

One can recognise a Fe2OG dioxygenase domain in the interval 78–177; it reads TLSTPLFNRY…RVASFMWIQS (100 aa). The Fe cation site is built by histidine 96, aspartate 98, and histidine 158. Arginine 168 lines the 2-oxoglutarate pocket.

Requires Fe(2+) as cofactor. It depends on L-ascorbate as a cofactor.

The sequence is that of PKHD-type hydroxylase YbiX from Escherichia coli O81 (strain ED1a).